The chain runs to 530 residues: Probable cytochrome P450 519A1 (530 aa).

The chain crosses the membrane as a helical span at residues 1-21; that stretch reads MESIINLIFYIIIFLILIDFL. Cys-476 contributes to the heme binding site.

Belongs to the cytochrome P450 family. Heme serves as cofactor.

It localises to the membrane. The sequence is that of Probable cytochrome P450 519A1 (cyp519A1) from Dictyostelium discoideum (Social amoeba).